A 94-amino-acid chain; its full sequence is Aspartyl/glutamyl-tRNA(Asn/Gln) amidotransferase subunit C (94 aa).

Belongs to the GatC family. Heterotrimer of A, B and C subunits.

It carries out the reaction L-glutamyl-tRNA(Gln) + L-glutamine + ATP + H2O = L-glutaminyl-tRNA(Gln) + L-glutamate + ADP + phosphate + H(+). The enzyme catalyses L-aspartyl-tRNA(Asn) + L-glutamine + ATP + H2O = L-asparaginyl-tRNA(Asn) + L-glutamate + ADP + phosphate + 2 H(+). Functionally, allows the formation of correctly charged Asn-tRNA(Asn) or Gln-tRNA(Gln) through the transamidation of misacylated Asp-tRNA(Asn) or Glu-tRNA(Gln) in organisms which lack either or both of asparaginyl-tRNA or glutaminyl-tRNA synthetases. The reaction takes place in the presence of glutamine and ATP through an activated phospho-Asp-tRNA(Asn) or phospho-Glu-tRNA(Gln). The polypeptide is Aspartyl/glutamyl-tRNA(Asn/Gln) amidotransferase subunit C (Desulfatibacillum aliphaticivorans).